The chain runs to 376 residues: N-acetyldiaminopimelate deacetylase (376 aa).

The active site involves Asp69. The Proton acceptor role is filled by Glu128.

This sequence belongs to the peptidase M20A family. N-acetyldiaminopimelate deacetylase subfamily.

The catalysed reaction is N-acetyl-(2S,6S)-2,6-diaminopimelate + H2O = (2S,6S)-2,6-diaminopimelate + acetate. It functions in the pathway amino-acid biosynthesis; L-lysine biosynthesis via DAP pathway; LL-2,6-diaminopimelate from (S)-tetrahydrodipicolinate (acetylase route): step 3/3. Catalyzes the conversion of N-acetyl-diaminopimelate to diaminopimelate and acetate. The chain is N-acetyldiaminopimelate deacetylase from Bacillus cereus (strain G9842).